Here is a 381-residue protein sequence, read N- to C-terminus: Probable peptidoglycan glycosyltransferase FtsW (381 aa).

The next 9 membrane-spanning stretches (helical) occupy residues 16-36 (LVLL…VYSA), 56-76 (LIFA…DYQL), 80-100 (WAVP…IPGI), 145-165 (LLSA…GLLL), 168-188 (PDMG…FAAG), 191-211 (LIFI…LVVH), 274-294 (VIGE…FFIL), 312-332 (FLAL…MAVV), and 343-363 (LPFL…VGIL).

This sequence belongs to the SEDS family. FtsW subfamily.

The protein resides in the cell inner membrane. The enzyme catalyses [GlcNAc-(1-&gt;4)-Mur2Ac(oyl-L-Ala-gamma-D-Glu-L-Lys-D-Ala-D-Ala)](n)-di-trans,octa-cis-undecaprenyl diphosphate + beta-D-GlcNAc-(1-&gt;4)-Mur2Ac(oyl-L-Ala-gamma-D-Glu-L-Lys-D-Ala-D-Ala)-di-trans,octa-cis-undecaprenyl diphosphate = [GlcNAc-(1-&gt;4)-Mur2Ac(oyl-L-Ala-gamma-D-Glu-L-Lys-D-Ala-D-Ala)](n+1)-di-trans,octa-cis-undecaprenyl diphosphate + di-trans,octa-cis-undecaprenyl diphosphate + H(+). The protein operates within cell wall biogenesis; peptidoglycan biosynthesis. Functionally, peptidoglycan polymerase that is essential for cell division. This chain is Probable peptidoglycan glycosyltransferase FtsW, found in Trichlorobacter lovleyi (strain ATCC BAA-1151 / DSM 17278 / SZ) (Geobacter lovleyi).